We begin with the raw amino-acid sequence, 165 residues long: Cyclic pyranopterin monophosphate synthase (165 aa).

Substrate is bound by residues 76 to 78 (LCH) and 114 to 115 (ME). Residue aspartate 129 is part of the active site.

The protein belongs to the MoaC family. Homohexamer; trimer of dimers.

It carries out the reaction (8S)-3',8-cyclo-7,8-dihydroguanosine 5'-triphosphate = cyclic pyranopterin phosphate + diphosphate. It participates in cofactor biosynthesis; molybdopterin biosynthesis. Its function is as follows. Catalyzes the conversion of (8S)-3',8-cyclo-7,8-dihydroguanosine 5'-triphosphate to cyclic pyranopterin monophosphate (cPMP). This Brucella canis (strain ATCC 23365 / NCTC 10854 / RM-666) protein is Cyclic pyranopterin monophosphate synthase.